We begin with the raw amino-acid sequence, 138 residues long: Hydrogenase maturation factor HypA (138 aa).

Ni(2+) is bound at residue His2. Zn(2+)-binding residues include Cys73, Cys76, Cys110, and Cys113.

Belongs to the HypA/HybF family.

In terms of biological role, involved in the maturation of [NiFe] hydrogenases. Required for nickel insertion into the metal center of the hydrogenase. In Thermococcus sibiricus (strain DSM 12597 / MM 739), this protein is Hydrogenase maturation factor HypA.